Consider the following 463-residue polypeptide: MTTETRSLYSQLPAIDRLLRDSSFLSLRDTYGHTRVVELLRQMLDEAREMIRDSQTLPAWCENWAQEVDARLTKEAQSALRPVINLTGTVLHTNLGRALQAEAAVEAVTKAMRSPVTLEYDLDDAGRGHRDRALAQLLCRITGAEDACIVNNNAAAVLLMLAATASGKEVVVSRGELVEIGGAFRIPDVMRQAGCTLHEVGTTNRTHAKDYRQAVNENTALLMKVHTSNYSIQGFTKAIDEAELVALGKELDVPVVTDLGSGSLVDLSQYGLPKEPMPQELIAAGVSLVSFSGDKLLGGPQAGIIVGKKEMIARLQSHPLKRALRADKMTLAALEATLRLYLHPEALSEKLPTLRLLTRSAEVIQIQAQRLQAPLAAHYGAEFAVQVMPCLSQIGSGSLPVDRLPSAALTFTPHDGRGSHLESLAARWRELPVPVIGRIYDGRLWLDLRCLEDEQRFLEMLLK.

Lys-295 carries the post-translational modification N6-(pyridoxal phosphate)lysine.

This sequence belongs to the SelA family. Homodecamer; pentamer of dimers. Binds only one seryl-tRNA(Sec) per dimer. Pyridoxal 5'-phosphate serves as cofactor.

Its subcellular location is the cytoplasm. It carries out the reaction L-seryl-tRNA(Sec) + selenophosphate + H(+) = L-selenocysteinyl-tRNA(Sec) + phosphate. It participates in aminoacyl-tRNA biosynthesis; selenocysteinyl-tRNA(Sec) biosynthesis; selenocysteinyl-tRNA(Sec) from L-seryl-tRNA(Sec) (bacterial route): step 1/1. Converts seryl-tRNA(Sec) to selenocysteinyl-tRNA(Sec) required for selenoprotein biosynthesis. The polypeptide is L-seryl-tRNA(Sec) selenium transferase (Escherichia coli O127:H6 (strain E2348/69 / EPEC)).